Consider the following 218-residue polypeptide: Protein-L-isoaspartate O-methyltransferase (218 aa).

Residue Ser-69 is part of the active site.

Belongs to the methyltransferase superfamily. L-isoaspartyl/D-aspartyl protein methyltransferase family.

The protein resides in the cytoplasm. The catalysed reaction is [protein]-L-isoaspartate + S-adenosyl-L-methionine = [protein]-L-isoaspartate alpha-methyl ester + S-adenosyl-L-homocysteine. Functionally, catalyzes the methyl esterification of L-isoaspartyl residues in peptides and proteins that result from spontaneous decomposition of normal L-aspartyl and L-asparaginyl residues. It plays a role in the repair and/or degradation of damaged proteins. The sequence is that of Protein-L-isoaspartate O-methyltransferase from Aromatoleum aromaticum (strain DSM 19018 / LMG 30748 / EbN1) (Azoarcus sp. (strain EbN1)).